We begin with the raw amino-acid sequence, 1038 residues long: Pro-apoptotic serine protease nma111 (1038 aa).

The disordered stretch occupies residues 1–47; that stretch reads MDLNGDSNAKRKRSSISAAAERPAKHLRPENSSLTPGDTTPANGTVY. Residues 30-43 are compositionally biased toward polar residues; the sequence is ENSSLTPGDTTPAN. The serine protease stretch occupies residues 82–275; that stretch reads VVSIHFCQTC…DRPLRALNCI (194 aa). Catalysis depends on charge relay system residues His-120, Asp-151, and Ser-233. PDZ domains lie at 289–374 and 877–958; these read QWIL…LLVQ and VFCG…VTFD.

The protein belongs to the peptidase S1C family.

It is found in the nucleus. Nuclear serine protease which mediates apoptosis. This is Pro-apoptotic serine protease nma111 (nma111) from Aspergillus terreus (strain NIH 2624 / FGSC A1156).